Consider the following 307-residue polypeptide: Beta-lactamase (307 aa).

The tat-type signal signal peptide spans 1–34 (MRNRGFGRRELLVAMAMLVSVTGCARHASGARPA). S84 acts as the Acyl-ester intermediate in catalysis. Residue S142 coordinates substrate. E182 serves as the catalytic Proton acceptor. Substrate is bound at residue 251 to 253 (TGT).

It belongs to the class-A beta-lactamase family. Monomer. In terms of processing, exported by the Tat system. The position of the signal peptide cleavage has not been experimentally proven.

The protein localises to the periplasm. The protein resides in the secreted. The catalysed reaction is a beta-lactam + H2O = a substituted beta-amino acid. Its activity is regulated as follows. Is inhibited by clavulanate. Extended spectrum beta-lactamase (ESBL) that inactivates beta-lactam antibiotics by hydrolyzing the amide group of the beta-lactam ring. Displays high levels of penicillinase and cephalosporinase activity as well as measurable activity with carbapenems, including imipenem and meropenem. Plays a primary role in the intrinsic resistance of mycobacteria to beta-lactam antibiotics. The chain is Beta-lactamase (blaC) from Mycobacterium bovis (strain ATCC BAA-935 / AF2122/97).